The sequence spans 374 residues: Ribosomal RNA large subunit methyltransferase M (374 aa).

S-adenosyl-L-methionine-binding positions include Ser188, 221-224, Asp240, Asp260, and Asp276; that span reads CPGG. The Proton acceptor role is filled by Lys305.

It belongs to the class I-like SAM-binding methyltransferase superfamily. RNA methyltransferase RlmE family. RlmM subfamily. As to quaternary structure, monomer.

It is found in the cytoplasm. The catalysed reaction is cytidine(2498) in 23S rRNA + S-adenosyl-L-methionine = 2'-O-methylcytidine(2498) in 23S rRNA + S-adenosyl-L-homocysteine + H(+). In terms of biological role, catalyzes the 2'-O-methylation at nucleotide C2498 in 23S rRNA. The sequence is that of Ribosomal RNA large subunit methyltransferase M from Edwardsiella ictaluri (strain 93-146).